The following is a 351-amino-acid chain: Probable aldo-keto reductase 2 (351 aa).

Tyr-67 acts as the Proton donor in catalysis. His-134 is a substrate binding site. 213 to 223 (SPLGRGFFSAG) serves as a coordination point for NADP(+). The tract at residues 317 to 351 (YASTDDVRGDRYPQAMANTTWQNSETPPLSSWKAQ) is disordered. Polar residues predominate over residues 332-351 (MANTTWQNSETPPLSSWKAQ).

This sequence belongs to the aldo/keto reductase family.

The sequence is that of Probable aldo-keto reductase 2 from Oryza sativa subsp. indica (Rice).